We begin with the raw amino-acid sequence, 609 residues long: UvrABC system protein C (609 aa).

The GIY-YIG domain occupies 13 to 91 (HQPGVYRMFD…IKAFQPRYNV (79 aa)). Residues 201–236 (QQVLEHLIKKMEQASMQLNFEQAAYFRDQIQAIRAV) enclose the UVR domain.

It belongs to the UvrC family. As to quaternary structure, interacts with UvrB in an incision complex.

It is found in the cytoplasm. Its function is as follows. The UvrABC repair system catalyzes the recognition and processing of DNA lesions. UvrC both incises the 5' and 3' sides of the lesion. The N-terminal half is responsible for the 3' incision and the C-terminal half is responsible for the 5' incision. The protein is UvrABC system protein C of Histophilus somni (strain 2336) (Haemophilus somnus).